The following is a 413-amino-acid chain: Chemotactic signal transduction system substrate-binding protein BasB (413 aa).

A signal peptide spans 1–31; the sequence is MHSTTRREWLGAIGATAATGLAGCAGVGGAG.

It is found in the cell membrane. Its function is as follows. Mediates chemotaxis towards five attractant amino acids (leucine, isoleucine, valine, methionine and cysteine). May function as a receptor that binds the amino acids and transduces a signal to BasT. Has probably no additional role in transport. In Halobacterium salinarum (strain ATCC 29341 / DSM 671 / R1), this protein is Chemotactic signal transduction system substrate-binding protein BasB (basB).